A 51-amino-acid chain; its full sequence is Large ribosomal subunit protein eL39 (51 aa).

The protein belongs to the eukaryotic ribosomal protein eL39 family.

The chain is Large ribosomal subunit protein eL39 from Thermococcus sibiricus (strain DSM 12597 / MM 739).